Here is a 112-residue protein sequence, read N- to C-terminus: Large ribosomal subunit protein bL17 (112 aa).

It belongs to the bacterial ribosomal protein bL17 family. As to quaternary structure, part of the 50S ribosomal subunit. Contacts protein L32.

This chain is Large ribosomal subunit protein bL17, found in Caldanaerobacter subterraneus subsp. tengcongensis (strain DSM 15242 / JCM 11007 / NBRC 100824 / MB4) (Thermoanaerobacter tengcongensis).